A 204-amino-acid polypeptide reads, in one-letter code: MRFPSVALDTLIDEFAKLPGIGRKTAQRLAMYILHEPKIEAEQLAKALLDVKEKVVRCTICQNITDVGTDPCAICASKARDRTVICVVESPVDMLAFEKTGHYKGLYHVLHGVISPLDGVGPDDIKVRELLARIPVGEASGVREVVLALNPTIEGETTSLYLARLLKPLGIAVTKIARGIPVGAELEYVDEATLSRAMEGRTVV.

Residues 58 to 75 (CTICQNITDVGTDPCAIC) form a C4-type zinc finger. The Toprim domain maps to 83–181 (TVICVVESPV…AVTKIARGIP (99 aa)).

It belongs to the RecR family.

May play a role in DNA repair. It seems to be involved in an RecBC-independent recombinational process of DNA repair. It may act with RecF and RecO. The protein is Recombination protein RecR of Chlorobium chlorochromatii (strain CaD3).